A 75-amino-acid polypeptide reads, in one-letter code: uncharacterized protein (75 aa).

This sequence belongs to the HSBP1 family.

This is an uncharacterized protein from Schizosaccharomyces pombe (strain 972 / ATCC 24843) (Fission yeast).